The sequence spans 107 residues: Quaternary ammonium compound-resistance protein QacC (107 aa).

Transmembrane regions (helical) follow at residues 26–46 (FSKFIPSLGTIISFGICFYFL), 57–77 (ITYATWAGLGLVLTTVVSIII), and 84–104 (LITIVSIVLIIVGVVSLNIFG).

Belongs to the drug/metabolite transporter (DMT) superfamily. Small multidrug resistance (SMR) (TC 2.A.7.1) family.

Its subcellular location is the cell membrane. Functionally, multidrug exporter. Is implicated for the resistance to bacteriocidal quaternary ammonium compounds. In Staphylococcus sp. (strain ST827), this protein is Quaternary ammonium compound-resistance protein QacC.